The chain runs to 215 residues: Adenylate kinase (215 aa).

ATP is bound at residue 10–15 (GAGKGT). Residues 30–59 (STGDILRDAVSKGTELGKMAKAIMDRGELV) form an NMP region. AMP contacts are provided by residues Thr-31, Arg-36, 57 to 59 (ELV), 82 to 85 (GYPR), and Gln-89. Residues 123 to 160 (NRRVCPNCGKVYNLITLQPKEDEKCDVCGTKLIQRDDD) form an LID region. Arg-124 contributes to the ATP binding site. Positions 127 and 130 each coordinate Zn(2+). Residue 133–134 (VY) participates in ATP binding. Zn(2+) is bound by residues Cys-147 and Cys-150. Positions 157 and 168 each coordinate AMP. Gln-196 is a binding site for ATP.

Belongs to the adenylate kinase family. As to quaternary structure, monomer.

It localises to the cytoplasm. The enzyme catalyses AMP + ATP = 2 ADP. It participates in purine metabolism; AMP biosynthesis via salvage pathway; AMP from ADP: step 1/1. Functionally, catalyzes the reversible transfer of the terminal phosphate group between ATP and AMP. Plays an important role in cellular energy homeostasis and in adenine nucleotide metabolism. The protein is Adenylate kinase of Petrotoga mobilis (strain DSM 10674 / SJ95).